A 96-amino-acid chain; its full sequence is (4S)-4-hydroxy-5-phosphonooxypentane-2,3-dione isomerase (96 aa).

Residues His2 to Phe91 enclose the ABM domain.

The protein belongs to the LsrG family. In terms of assembly, homodimer.

It localises to the cytoplasm. The enzyme catalyses (2S)-2-hydroxy-3,4-dioxopentyl phosphate = 3-hydroxy-2,4-dioxopentyl phosphate. In terms of biological role, involved in the degradation of phospho-AI-2, thereby terminating induction of the lsr operon and closing the AI-2 signaling cycle. Catalyzes the conversion of (4S)-4-hydroxy-5-phosphonooxypentane-2,3-dione (P-DPD) to 3-hydroxy-5-phosphonooxypentane-2,4-dione (P-HPD). The chain is (4S)-4-hydroxy-5-phosphonooxypentane-2,3-dione isomerase from Salmonella typhimurium (strain LT2 / SGSC1412 / ATCC 700720).